Consider the following 393-residue polypeptide: MTNEEPLPKKVRLNESDFKVLPREDLLQRWKQYEAYVQALENKYTDLNSNDVTGLRESEEKLKQQQQESARRENILVMRLATKEQEMQECTNQIQHLKQVQQPSVAQLRATMVDPAINLFFIKMKAELEQTKDKLEQAQNELSAWKFTPDSQTGKKLMAKCRMLIQENQELGRQLSQGRIAQLEAELALQKKYSEELKSSQDELNDFIIQLDEEVEGMQSTILVLQQQLKDSRQQLSQFQQQIQISGNRTPSSEPKDEGETSGKDCGRILNGPSNGGSSLQRTHSSAGLYREGSSTEDDFSASPINEGKLSNHSQERTSRDGSSYINPLSTGYESVDSPTGSENSLTHQSNDTDSNHDSQEEKPVSGKGNRTVSSRHLQNGLDSSVNVQGSVL.

The segment at 242 to 393 is disordered; that stretch reads QIQISGNRTP…SSVNVQGSVL (152 aa). Basic and acidic residues predominate over residues 254-267; it reads EPKDEGETSGKDCG. Polar residues-rich tracts occupy residues 272-286 and 321-353; these read GPSN…THSS and DGSS…SNDT. Over residues 354 to 365 the composition is skewed to basic and acidic residues; that stretch reads DSNHDSQEEKPV. The span at 369–393 shows a compositional bias: polar residues; that stretch reads GNRTVSSRHLQNGLDSSVNVQGSVL.

Belongs to the fl(2)d family. In terms of assembly, component of the WMM complex, a N6-methyltransferase complex composed of a catalytic subcomplex, named MAC, and of an associated subcomplex, named MACOM. Component of the MACOM subcomplex.

The protein resides in the nucleus speckle. It is found in the nucleus. The protein localises to the nucleoplasm. In terms of biological role, associated component of the WMM complex, a complex that mediates N6-methyladenosine (m6A) methylation of RNAs, a modification that plays a role in the efficiency of mRNA splicing and RNA processing. The sequence is that of Pre-mRNA-splicing regulator WTAP from Xenopus laevis (African clawed frog).